Reading from the N-terminus, the 135-residue chain is S-adenosylmethionine decarboxylase proenzyme (135 aa).

The active-site Schiff-base intermediate with substrate; via pyruvic acid is S64. Residue S64 is modified to Pyruvic acid (Ser); by autocatalysis. H69 acts as the Proton acceptor; for processing activity in catalysis. C84 acts as the Proton donor; for catalytic activity in catalysis.

It belongs to the prokaryotic AdoMetDC family. Type 1 subfamily. As to quaternary structure, heterotetramer of two alpha and two beta chains arranged as a dimer of alpha/beta heterodimers. Pyruvate serves as cofactor. Post-translationally, is synthesized initially as an inactive proenzyme. Formation of the active enzyme involves a self-maturation process in which the active site pyruvoyl group is generated from an internal serine residue via an autocatalytic post-translational modification. Two non-identical subunits are generated from the proenzyme in this reaction, and the pyruvate is formed at the N-terminus of the alpha chain, which is derived from the carboxyl end of the proenzyme. The post-translation cleavage follows an unusual pathway, termed non-hydrolytic serinolysis, in which the side chain hydroxyl group of the serine supplies its oxygen atom to form the C-terminus of the beta chain, while the remainder of the serine residue undergoes an oxidative deamination to produce ammonia and the pyruvoyl group blocking the N-terminus of the alpha chain.

The enzyme catalyses S-adenosyl-L-methionine + H(+) = S-adenosyl 3-(methylsulfanyl)propylamine + CO2. Its pathway is amine and polyamine biosynthesis; S-adenosylmethioninamine biosynthesis; S-adenosylmethioninamine from S-adenosyl-L-methionine: step 1/1. Functionally, catalyzes the decarboxylation of S-adenosylmethionine to S-adenosylmethioninamine (dcAdoMet), the propylamine donor required for the synthesis of the polyamines spermine and spermidine from the diamine putrescine. This is S-adenosylmethionine decarboxylase proenzyme from Aquifex aeolicus (strain VF5).